The sequence spans 229 residues: ATP-dependent Clp protease proteolytic subunit 1 (229 aa).

Serine 129 (nucleophile) is an active-site residue. The active site involves histidine 154.

It belongs to the peptidase S14 family. As to quaternary structure, fourteen ClpP subunits assemble into 2 heptameric rings which stack back to back to give a disk-like structure with a central cavity, resembling the structure of eukaryotic proteasomes.

Its subcellular location is the cytoplasm. The catalysed reaction is Hydrolysis of proteins to small peptides in the presence of ATP and magnesium. alpha-casein is the usual test substrate. In the absence of ATP, only oligopeptides shorter than five residues are hydrolyzed (such as succinyl-Leu-Tyr-|-NHMec, and Leu-Tyr-Leu-|-Tyr-Trp, in which cleavage of the -Tyr-|-Leu- and -Tyr-|-Trp bonds also occurs).. Its function is as follows. Cleaves peptides in various proteins in a process that requires ATP hydrolysis. Has a chymotrypsin-like activity. Plays a major role in the degradation of misfolded proteins. The sequence is that of ATP-dependent Clp protease proteolytic subunit 1 from Thermosynechococcus vestitus (strain NIES-2133 / IAM M-273 / BP-1).